The sequence spans 313 residues: Protein sprouty homolog 1 (313 aa).

The residue at position 1 (Met-1) is an N-acetylmethionine. The disordered stretch occupies residues 43–152; the sequence is QIKAIRGSNE…RSDRVIRTQP (110 aa). Residues 69 to 79 are compositionally biased toward basic and acidic residues; the sequence is PRPEKQERTHE. Over residues 106 to 125 the composition is skewed to low complexity; it reads SRSTSTGSAASSGSSSSVSS. The region spanning 177–289 is the SPR domain; sequence QCGKCKCGEC…CYDWTHRPGC (113 aa).

Belongs to the sprouty family. As to quaternary structure, forms heterodimers with SPRY2. Interacts with TESK1. Interacts with CAV1 (via C-terminus).

Its subcellular location is the cytoplasm. It is found in the membrane. Functionally, inhibits fibroblast growth factor (FGF)-induced retinal lens fiber differentiation, probably by inhibiting FGF-mediated phosphorylation of ERK1/2. Inhibits TGFB-induced epithelial-to-mesenchymal transition in lens epithelial cells. In Mus musculus (Mouse), this protein is Protein sprouty homolog 1 (Spry1).